Consider the following 288-residue polypeptide: Elongation factor Ts (288 aa).

The segment at 82–85 (TDFV) is involved in Mg(2+) ion dislocation from EF-Tu.

This sequence belongs to the EF-Ts family.

The protein localises to the cytoplasm. Functionally, associates with the EF-Tu.GDP complex and induces the exchange of GDP to GTP. It remains bound to the aminoacyl-tRNA.EF-Tu.GTP complex up to the GTP hydrolysis stage on the ribosome. In Chlorobaculum tepidum (strain ATCC 49652 / DSM 12025 / NBRC 103806 / TLS) (Chlorobium tepidum), this protein is Elongation factor Ts.